A 177-amino-acid polypeptide reads, in one-letter code: Inner membrane-spanning protein YciB (177 aa).

The next 5 helical transmembrane spans lie at 23 to 43 (MFVA…WAWF), 50 to 70 (TMQW…LLLH), 73 to 93 (HFIM…LLIS), 119 to 139 (LTWA…FVAY), and 149 to 169 (FKLF…SLFL).

The protein belongs to the YciB family.

The protein resides in the cell inner membrane. Functionally, plays a role in cell envelope biogenesis, maintenance of cell envelope integrity and membrane homeostasis. This is Inner membrane-spanning protein YciB from Chromobacterium violaceum (strain ATCC 12472 / DSM 30191 / JCM 1249 / CCUG 213 / NBRC 12614 / NCIMB 9131 / NCTC 9757 / MK).